Reading from the N-terminus, the 305-residue chain is Probable 5-dehydro-4-deoxyglucarate dehydratase (305 aa).

This sequence belongs to the DapA family.

It carries out the reaction 5-dehydro-4-deoxy-D-glucarate + H(+) = 2,5-dioxopentanoate + CO2 + H2O. It functions in the pathway carbohydrate acid metabolism; D-glucarate degradation; 2,5-dioxopentanoate from D-glucarate: step 2/2. This is Probable 5-dehydro-4-deoxyglucarate dehydratase from Xanthomonas campestris pv. campestris (strain B100).